We begin with the raw amino-acid sequence, 342 residues long: MRNILLKIYDSKFLNQEESYQLFTLISSGKITDIKLASILTAMKIRGESIEEITGAIKAFLDKMKYFPKPDYIFSDIVGTGGDAKNTINISTMSAFVAATCGLKIIKHCNQRISSKSGSSDILEKFNINLNASPEKSRKTLDQLNICFLFAPKYHDGFKYSNNVRTDLKTKTIFNFLGPFLNPATPPLSVIGVYNKNLINIAVNILKNLQYKRAIVLHSDNTDEVTLYGTTYVSELLNKKIISYQLQPESFGLKMHPKKILKINSLEENYHIIKEIMKGKGSKLYEELIAVNVAMLLKVFGYENLKENTKLALNKIRSGDVYKHIRNVANMLKEDNHARHNT.

5-phospho-alpha-D-ribose 1-diphosphate-binding positions include Gly79, 82 to 83, Thr87, 89 to 92, 107 to 115, and Ser119; these read GD, NIST, and KHCNQRISS. Gly79 contributes to the anthranilate binding site. Mg(2+) is bound at residue Ser91. Anthranilate is bound at residue Asn110. Arg165 provides a ligand contact to anthranilate. Mg(2+) contacts are provided by Asp223 and Glu224.

It belongs to the anthranilate phosphoribosyltransferase family. Homodimer. Requires Mg(2+) as cofactor.

It catalyses the reaction N-(5-phospho-beta-D-ribosyl)anthranilate + diphosphate = 5-phospho-alpha-D-ribose 1-diphosphate + anthranilate. It functions in the pathway amino-acid biosynthesis; L-tryptophan biosynthesis; L-tryptophan from chorismate: step 2/5. Its function is as follows. Catalyzes the transfer of the phosphoribosyl group of 5-phosphorylribose-1-pyrophosphate (PRPP) to anthranilate to yield N-(5'-phosphoribosyl)-anthranilate (PRA). This Buchnera aphidicola subsp. Acyrthosiphon pisum (strain 5A) protein is Anthranilate phosphoribosyltransferase.